The chain runs to 872 residues: uncharacterized protein (872 aa).

Positions 496–524 (LQQHHQDISAMQQQILEEKNQLRRATIDV) form a coiled coil. 2 disordered regions span residues 595-736 (RPAV…SVQQ) and 844-872 (TKENISVNPRDASKAPKSRFQRTKPPQAV). 2 stretches are compositionally biased toward polar residues: residues 615 to 659 (QNGN…QTTF) and 670 to 686 (PYASRATSNGLSPNNVV). The span at 687-736 (QQYQSYYDNPSNQQSNQQSNQQSNQQPNQQPNQQPNQQPNQQPNQQSVQQ) shows a compositional bias: low complexity.

It is found in the virion. This is an uncharacterized protein from Acanthamoeba polyphaga mimivirus (APMV).